A 367-amino-acid polypeptide reads, in one-letter code: GTP cyclohydrolase FolE2 (367 aa).

Belongs to the GTP cyclohydrolase IV family.

It carries out the reaction GTP + H2O = 7,8-dihydroneopterin 3'-triphosphate + formate + H(+). The protein operates within cofactor biosynthesis; 7,8-dihydroneopterin triphosphate biosynthesis; 7,8-dihydroneopterin triphosphate from GTP: step 1/1. Its function is as follows. Converts GTP to 7,8-dihydroneopterin triphosphate. In Roseobacter denitrificans (strain ATCC 33942 / OCh 114) (Erythrobacter sp. (strain OCh 114)), this protein is GTP cyclohydrolase FolE2.